A 295-amino-acid polypeptide reads, in one-letter code: Acetylglutamate kinase (295 aa).

Substrate-binding positions include glycine 61–glycine 62, arginine 83, and asparagine 182.

This sequence belongs to the acetylglutamate kinase family. ArgB subfamily.

It localises to the cytoplasm. It carries out the reaction N-acetyl-L-glutamate + ATP = N-acetyl-L-glutamyl 5-phosphate + ADP. It participates in amino-acid biosynthesis; L-arginine biosynthesis; N(2)-acetyl-L-ornithine from L-glutamate: step 2/4. Functionally, catalyzes the ATP-dependent phosphorylation of N-acetyl-L-glutamate. This chain is Acetylglutamate kinase, found in Clostridium acetobutylicum (strain ATCC 824 / DSM 792 / JCM 1419 / IAM 19013 / LMG 5710 / NBRC 13948 / NRRL B-527 / VKM B-1787 / 2291 / W).